Reading from the N-terminus, the 207-residue chain is MLGVQKKRSTRKTAARKTVVRKPAAKKTAAKKASVRKVAAKKTVARKTVAKKAVAARKPAAKKTAAKKAPVRKVAAKKTVARKTVAKKAVAARKTVAKKSVAARKTAAKKAPVRKVAAKKTVARKTVAKKAVAARKPAAKRTVSTKKTAVAAKAGVCMKKHKHTAACGRVAASGVKVCASSAKRRTHHNRSRTAHSWRQQLMKLVAK.

Basic residues-rich tracts occupy residues 1 to 50 and 59 to 72; these read MLGV…KTVA and PAAKKTAAKKAPVR. The tract at residues 1 to 72 is disordered; the sequence is MLGVQKKRST…KTAAKKAPVR (72 aa). Repeat copies occupy residues 35-58, 71-94, and 113-136. A 3 X 24 AA repeats of V-R-K-V-A-A-K-K-T-V-A-R-K-T-V-A-K-K-A-V-A-A-R-K region spans residues 35-136; sequence VRKVAAKKTV…VAKKAVAARK (102 aa).

Belongs to the histone H1/H5 family. HCT subfamily.

Functionally, might have a role in establishing the nucleoid structure of elementary bodies. The sequence is that of Histone H1-like protein HC2 (hctB) from Chlamydia muridarum (strain MoPn / Nigg).